The following is a 273-amino-acid chain: Tyrosinase (273 aa).

A signal peptide spans 1 to 18; it reads MCLLALGFLLGILQPASG. Asparagine 86 and asparagine 169 each carry an N-linked (GlcNAc...) asparagine glycan. Histidine 180, histidine 202, and histidine 211 together coordinate Cu cation. N-linked (GlcNAc...) asparagine glycosylation is present at asparagine 230.

This sequence belongs to the tyrosinase family. Cu(2+) serves as cofactor.

It localises to the melanosome membrane. The enzyme catalyses 2 L-dopa + O2 = 2 L-dopaquinone + 2 H2O. It carries out the reaction L-tyrosine + O2 = L-dopaquinone + H2O. In terms of biological role, this is a copper-containing oxidase that functions in the formation of pigments such as melanins and other polyphenolic compounds. The chain is Tyrosinase (TYR) from Pelodiscus sinensis (Chinese softshell turtle).